The sequence spans 504 residues: Arabinose import ATP-binding protein AraG (504 aa).

2 ABC transporter domains span residues 8-243 (LSFR…MVGR) and 256-499 (YGEE…MPKV). 40–47 (GENGAGKS) contributes to the ATP binding site.

Belongs to the ABC transporter superfamily. Arabinose importer (TC 3.A.1.2.2) family. The complex is composed of two ATP-binding proteins (AraG), two transmembrane proteins (AraH) and a solute-binding protein (AraF).

It is found in the cell inner membrane. It carries out the reaction L-arabinose(out) + ATP + H2O = L-arabinose(in) + ADP + phosphate + H(+). Functionally, part of the ABC transporter complex AraFGH involved in arabinose import. Responsible for energy coupling to the transport system. The protein is Arabinose import ATP-binding protein AraG of Shigella boydii serotype 4 (strain Sb227).